Consider the following 520-residue polypeptide: Probable methylmalonate-semialdehyde/malonate-semialdehyde dehydrogenase [acylating], mitochondrial (520 aa).

NAD(+) contacts are provided by Ala169, Phe171, Lys195, Glu198, Arg199, and Ser248. The Nucleophile role is filled by Cys303. Glu403 is a binding site for NAD(+).

It belongs to the aldehyde dehydrogenase family. In terms of assembly, homotetramer.

It localises to the mitochondrion. It catalyses the reaction 2-methyl-3-oxopropanoate + NAD(+) + CoA + H2O = propanoyl-CoA + hydrogencarbonate + NADH + H(+). The enzyme catalyses 3-oxopropanoate + NAD(+) + CoA + H2O = hydrogencarbonate + acetyl-CoA + NADH + H(+). Functionally, probable malonate and methylmalonate semialdehyde dehydrogenase involved in the catabolism of valine, thymine, and compounds catabolized by way of beta-alanine, including uracil and cytidine. This chain is Probable methylmalonate-semialdehyde/malonate-semialdehyde dehydrogenase [acylating], mitochondrial, found in Drosophila melanogaster (Fruit fly).